A 431-amino-acid polypeptide reads, in one-letter code: Keratin, type I cytoskeletal 40 (431 aa).

The tract at residues 1–89 is head; the sequence is MASDCSPTGC…CEDGVFNSNE (89 aa). Residues 89–400 enclose the IF rod domain; it reads EKETMQFLND…GLLDSEDSRL (312 aa). The segment at 90 to 124 is coil 1A; that stretch reads KETMQFLNDRLASYLEKVRGLEELNAELECRIREQ. The tract at residues 125 to 135 is linker 1; the sequence is CEEDVPLVCPD. A coil 1B region spans residues 136-236; the sequence is YQCYFDTIED…HEEEVNVLRG (101 aa). Residues 237–252 are linker 12; sequence QLGDRLSVELDTAPTT. Residues 253-396 form a coil 2 region; that stretch reads DLNRVLDEMR…NTYQGLLDSE (144 aa). Residues 397–431 are tail; the sequence is DSRLPCNPCSATSMSNDTCEPCSAYVICTVENSCP.

Belongs to the intermediate filament family. Heterotetramer of two type I and two type II keratins.

In terms of biological role, may play a role in late hair differentiation. In Bos taurus (Bovine), this protein is Keratin, type I cytoskeletal 40 (KRT40).